A 170-amino-acid chain; its full sequence is Adenine phosphoribosyltransferase (170 aa).

Belongs to the purine/pyrimidine phosphoribosyltransferase family. Homodimer.

The protein resides in the cytoplasm. The catalysed reaction is AMP + diphosphate = 5-phospho-alpha-D-ribose 1-diphosphate + adenine. Its pathway is purine metabolism; AMP biosynthesis via salvage pathway; AMP from adenine: step 1/1. Functionally, catalyzes a salvage reaction resulting in the formation of AMP, that is energically less costly than de novo synthesis. This is Adenine phosphoribosyltransferase from Acaryochloris marina (strain MBIC 11017).